A 482-amino-acid polypeptide reads, in one-letter code: Glycogen synthase (482 aa).

Lys-18 lines the ADP-alpha-D-glucose pocket.

It belongs to the glycosyltransferase 1 family. Bacterial/plant glycogen synthase subfamily.

The catalysed reaction is [(1-&gt;4)-alpha-D-glucosyl](n) + ADP-alpha-D-glucose = [(1-&gt;4)-alpha-D-glucosyl](n+1) + ADP + H(+). Its pathway is glycan biosynthesis; glycogen biosynthesis. Its function is as follows. Synthesizes alpha-1,4-glucan chains using ADP-glucose. In Rhodopseudomonas palustris (strain HaA2), this protein is Glycogen synthase.